The primary structure comprises 158 residues: MNRICHIEIDQTSPIPPTAEIEQERQVAIFDLLEENSFALPVREGRAPAEGPFRLTLAIREGRLVFDIRSEEEEKVGEFHLSLGPFRQVVKDYFQICESYFEAVKRLPPSQIEAIDMARRGIHNEGARVLKERLEGKAEVDIDTARRLFTLICVLHWG.

The protein belongs to the UPF0262 family.

The sequence is that of UPF0262 protein Rsph17029_2283 from Cereibacter sphaeroides (strain ATCC 17029 / ATH 2.4.9) (Rhodobacter sphaeroides).